We begin with the raw amino-acid sequence, 320 residues long: Polyadenylate-binding protein-interacting protein 13 (320 aa).

A disordered region spans residues 1–44; sequence MAVAENVGVKVDSSNNQNIDNNTTSLVETKPSCSDDQTPKSKSS. Residues 12 to 44 are compositionally biased toward polar residues; that stretch reads DSSNNQNIDNNTTSLVETKPSCSDDQTPKSKSS. The PAM2-like motif lies at 65-75; sequence HLNPMAKEFVP. 2 RRM domains span residues 137 to 212 and 234 to 310; these read RTVY…MSKT and KTVY…PSKT.

In Arabidopsis thaliana (Mouse-ear cress), this protein is Polyadenylate-binding protein-interacting protein 13 (CID13).